Reading from the N-terminus, the 352-residue chain is Rhodopsin (352 aa).

The Extracellular portion of the chain corresponds to 1-36 (MNGTEGPFFYIPMVNTTGIVRSPYEYPQYYLVNPAA). N-linked (GlcNAc...) asparagine glycosylation is found at Asn-2 and Asn-15. A helical transmembrane segment spans residues 37–61 (YACLGAYMFFLILVGFPVNFLTLYV). The Cytoplasmic portion of the chain corresponds to 62–73 (TLEHKKLRTPLN). The chain crosses the membrane as a helical span at residues 74-96 (YILLNLAVADLFMVFGGFTTTMY). At 97-110 (TSMHGYFVLGRLGC) the chain is on the extracellular side. Cys-110 and Cys-187 are disulfide-bonded. A helical membrane pass occupies residues 111–133 (NIEGFFATLGGEIALWSLVVLAI). The 'Ionic lock' involved in activated form stabilization motif lies at 134–136 (ERW). Over 134–152 (ERWVVVCKPISNFRFGENH) the chain is Cytoplasmic. Residues 153–173 (AIMGVAFTWFMASACAVPPLV) form a helical membrane-spanning segment. The Extracellular portion of the chain corresponds to 174 to 202 (GWSRYIPEGMQCSCGVDYYTRAEGFNNES). An N-linked (GlcNAc...) asparagine glycan is attached at Asn-200. Residues 203–224 (FVIYMFIVHFCIPLAVVGFCYG) traverse the membrane as a helical segment. Residues 225–252 (RLLCAVKEAAAAQQESETTQRAEREVSR) are Cytoplasmic-facing. Residues 253 to 274 (MVVIMVIGFLVCWLPYASVAWY) traverse the membrane as a helical segment. Topologically, residues 275–286 (IFTHQGSEFGPP) are extracellular. Residues 287-308 (FMTVPAFFAKSSSIYNPMIYIC) form a helical membrane-spanning segment. An N6-(retinylidene)lysine modification is found at Lys-296. At 309–352 (MNKQFRHCMITTLCCGKNPFEEEEGASTTKTEASSVSSSSVSPA) the chain is on the cytoplasmic side. S-palmitoyl cysteine attachment occurs at residues Cys-322 and Cys-323. The tract at residues 331-352 (EEGASTTKTEASSVSSSSVSPA) is disordered. Residues 342 to 352 (SSVSSSSVSPA) are compositionally biased toward low complexity.

The protein belongs to the G-protein coupled receptor 1 family. Opsin subfamily. Post-translationally, phosphorylated on some or all of the serine and threonine residues present in the C-terminal region. In terms of processing, contains one covalently linked retinal chromophore.

The protein localises to the membrane. Its subcellular location is the cell projection. It localises to the cilium. It is found in the photoreceptor outer segment. Its function is as follows. Photoreceptor required for image-forming vision at low light intensity. While most salt water fish species use retinal as chromophore, most freshwater fish use 3-dehydroretinal, or a mixture of retinal and 3-dehydroretinal. Light-induced isomerization of 11-cis to all-trans retinal triggers a conformational change that activates signaling via G-proteins. Subsequent receptor phosphorylation mediates displacement of the bound G-protein alpha subunit by arrestin and terminates signaling. The protein is Rhodopsin (rho) of Zosterisessor ophiocephalus (Grass goby).